The sequence spans 30 residues: Varv peptide G (30 aa).

The cyclopeptide (Gly-Asn) cross-link spans 1-30 (GVPVCGETCFGGTCNTPGCSCDPWPVCSRN). Cystine bridges form between cysteine 5–cysteine 19, cysteine 9–cysteine 21, and cysteine 14–cysteine 27.

In terms of processing, this is a cyclic peptide.

Its function is as follows. Probably participates in a plant defense mechanism. The sequence is that of Varv peptide G from Viola arvensis (European field pansy).